The following is a 730-amino-acid chain: Catalase-peroxidase 1 (730 aa).

A cross-link (tryptophyl-tyrosyl-methioninium (Trp-Tyr) (with M-243)) is located at residues Trp92 to Tyr217. The Proton acceptor role is filled by His93. The tryptophyl-tyrosyl-methioninium (Tyr-Met) (with W-92) cross-link spans Tyr217–Met243. His258 provides a ligand contact to heme b.

It belongs to the peroxidase family. Peroxidase/catalase subfamily. In terms of assembly, homodimer or homotetramer. The cofactor is heme b. Formation of the three residue Trp-Tyr-Met cross-link is important for the catalase, but not the peroxidase activity of the enzyme.

It carries out the reaction H2O2 + AH2 = A + 2 H2O. The catalysed reaction is 2 H2O2 = O2 + 2 H2O. Its function is as follows. Bifunctional enzyme with both catalase and broad-spectrum peroxidase activity. In Haloarcula marismortui (strain ATCC 43049 / DSM 3752 / JCM 8966 / VKM B-1809) (Halobacterium marismortui), this protein is Catalase-peroxidase 1.